A 300-amino-acid chain; its full sequence is PAK4-inhibitor INKA2 (300 aa).

Disordered stretches follow at residues 59–104 (GGTP…SSPK), 178–201 (LEKG…GQSR), and 230–288 (KEKP…LEPS). The span at 60 to 73 (GTPTFSCPESSQEQ) shows a compositional bias: polar residues. The span at 93-102 (SSSQPSFDSS) shows a compositional bias: low complexity. Residues 140–183 (EPDDWTSTLMSRGRNRQPLVLGDNVFADLVGNWLDLPELEKGGE) are inka box. Positions 246–256 (GRSKKVKKRSL) are enriched in basic residues.

Belongs to the INKA family. As to quaternary structure, interacts with PAK4. As to expression, enriched in the nervous system.

It localises to the nucleus. Inhibitor of the serine/threonine-protein kinase PAK4. Acts by binding PAK4 in a substrate-like manner, inhibiting the protein kinase activity. This chain is PAK4-inhibitor INKA2, found in Mus musculus (Mouse).